Reading from the N-terminus, the 25-residue chain is Caerin-1.18 (25 aa).

A Leucine amide modification is found at Leu25.

In terms of tissue distribution, expressed by the skin dorsal glands.

It is found in the secreted. In terms of biological role, shows significant activity against Gram-positive organisms, but is less effective against Gram-negative organisms. The chain is Caerin-1.18 from Ranoidea gracilenta (Dainty green tree frog).